We begin with the raw amino-acid sequence, 435 residues long: Xylose isomerase (435 aa).

Residues histidine 100 and aspartate 103 contribute to the active site. Mg(2+) contacts are provided by glutamate 231, glutamate 267, histidine 270, aspartate 295, aspartate 306, aspartate 308, and aspartate 338.

The protein belongs to the xylose isomerase family. Homotetramer. Requires Mg(2+) as cofactor.

The protein localises to the cytoplasm. The enzyme catalyses alpha-D-xylose = alpha-D-xylulofuranose. This is Xylose isomerase from Brucella suis (strain ATCC 23445 / NCTC 10510).